A 515-amino-acid polypeptide reads, in one-letter code: SWI/SNF-related matrix-associated actin-dependent regulator of chromatin subfamily D member 1 (515 aa).

The interval 1–128 (MAARAGFQSV…RNHNAKKKKM (128 aa)) is disordered. The span at 14 to 23 (GGAGASGGAG) shows a compositional bias: gly residues. The segment at 43–167 (APGQGLYRSP…DQTIMRKRLD (125 aa)) is interaction with ESR1, NR1H4, NR3C1, PGR and SMARCA4. Asymmetric dimethylarginine occurs at positions 68 and 88. Residue K101 forms a Glycyl lysine isopeptide (Lys-Gly) (interchain with G-Cter in SUMO2) linkage. Residues 104-117 (APQQIQQVQQQAVQ) show a composition bias toward low complexity. Positions 168 to 474 (IQEALKRPIK…TMTDVVGNPE (307 aa)) are interaction with SMARCC1 and SMARCC2. The interval 180 to 515 (RKLRIFISNT…LEQALGIRNT (336 aa)) is necessary for GR/NR3C1-mediated remodeling and transcription from chromatin; required for GR/NR3C1 interaction with the BRG1/SMARCA4 complex in vivo. The residue at position 203 (T203) is a Phosphothreonine. N6-acetyllysine is present on K223. One can recognise an SWIB/MDM2 domain in the interval 290-367 (YQPPQFKLDP…PQRLHALLMP (78 aa)). Positions 412–440 (ASQQEIATLDNKIHETIETINQLKTQREF) form a coiled coil.

This sequence belongs to the SMARCD family. As to quaternary structure, component of the multiprotein chromatin-remodeling complexes SWI/SNF: SWI/SNF-A (BAF), SWI/SNF-B (PBAF) and related complexes. The canonical complex contains a catalytic subunit (either SMARCA4/BRG1/BAF190A or SMARCA2/BRM/BAF190B), and at least SMARCE1, ACTL6A/BAF53, SMARCC1/BAF155, SMARCC2/BAF170, and SMARCB1/SNF5/BAF47. Other subunits specific to each of the complexes may also be present permitting several possible combinations developmentally and tissue specific. Component of the BAF complex, which includes at least actin (ACTB), ARID1A/BAF250A, ARID1B/BAF250B, SMARCA2/BRM, SMARCA4/BRG1/BAF190A, ACTL6A/BAF53, ACTL6B/BAF53B, SMARCE1/BAF57, SMARCC1/BAF155, SMARCC2/BAF170, SMARCB1/SNF5/INI1, and one or more SMARCD1/BAF60A, SMARCD2/BAF60B, or SMARCD3/BAF60C. In muscle cells, the BAF complex also contains DPF3. Component of neural progenitors-specific chromatin remodeling complex (npBAF complex) composed of at least, ARID1A/BAF250A or ARID1B/BAF250B, SMARCD1/BAF60A, SMARCD3/BAF60C, SMARCA2/BRM/BAF190B, SMARCA4/BRG1/BAF190A, SMARCB1/BAF47, SMARCC1/BAF155, SMARCE1/BAF57, SMARCC2/BAF170, PHF10/BAF45A, ACTL6A/BAF53A and actin. Component of neuron-specific chromatin remodeling complex (nBAF complex) composed of at least, ARID1A/BAF250A or ARID1B/BAF250B, SMARCD1/BAF60A, SMARCD3/BAF60C, SMARCA2/BRM/BAF190B, SMARCA4/BRG1/BAF190A, SMARCB1/BAF47, SMARCC1/BAF155, SMARCE1/BAF57, SMARCC2/BAF170, DPF1/BAF45B, DPF3/BAF45C, ACTL6B/BAF53B and actin. Component of the SWI/SNF-B (PBAF) chromatin remodeling complex, at least composed of SMARCA4/BRG1, SMARCB1/BAF47/SNF5, ACTL6A/BAF53A or ACTL6B/BAF53B, SMARCE1/BAF57, SMARCD1/BAF60A, SMARCD2/BAF60B, perhaps SMARCD3/BAF60C, SMARCC1/BAF155, SMARCC2/BAF170, PBRM1/BAF180, ARID2/BAF200 and actin (ACTB). Component of SWI/SNF (GBAF) subcomplex, which includes at least BICRA or BICRAL (mutually exclusive), BRD9, SS18, SMARCA2/BRM, SMARCA4/BRG1/BAF190A, ACTL6A/BAF53, SMARCC1/BAF155, and SMARCD1/BAF60A. Specifically interacts with the VDR heterodimer complex. Interacts with ESR1, NR3C1, NR1H4, PGR, SMARCA4, SMARCC1 and SMARCC2. Interacts with DPF2. Interacts with DPF3a (isoform 2 of DPF3/BAF45C) and with HDGFL2 in a DPF3a-dependent manner. Interacts with FOS, FOSB isoform 1 and 2, FOSL1 and FOSL2. Interacts with AKIRIN2. Ubiquitous.

It is found in the nucleus. Its function is as follows. Involved in transcriptional activation and repression of select genes by chromatin remodeling (alteration of DNA-nucleosome topology). Component of SWI/SNF chromatin remodeling complexes that carry out key enzymatic activities, changing chromatin structure by altering DNA-histone contacts within a nucleosome in an ATP-dependent manner. Belongs to the neural progenitors-specific chromatin remodeling complex (npBAF complex) and the neuron-specific chromatin remodeling complex (nBAF complex). During neural development a switch from a stem/progenitor to a postmitotic chromatin remodeling mechanism occurs as neurons exit the cell cycle and become committed to their adult state. The transition from proliferating neural stem/progenitor cells to postmitotic neurons requires a switch in subunit composition of the npBAF and nBAF complexes. As neural progenitors exit mitosis and differentiate into neurons, npBAF complexes which contain ACTL6A/BAF53A and PHF10/BAF45A, are exchanged for homologous alternative ACTL6B/BAF53B and DPF1/BAF45B or DPF3/BAF45C subunits in neuron-specific complexes (nBAF). The npBAF complex is essential for the self-renewal/proliferative capacity of the multipotent neural stem cells. The nBAF complex along with CREST plays a role regulating the activity of genes essential for dendrite growth. Has a strong influence on vitamin D-mediated transcriptional activity from an enhancer vitamin D receptor element (VDRE). May be a link between mammalian SWI-SNF-like chromatin remodeling complexes and the vitamin D receptor (VDR) heterodimer. Mediates critical interactions between nuclear receptors and the BRG1/SMARCA4 chromatin-remodeling complex for transactivation. This Mus musculus (Mouse) protein is SWI/SNF-related matrix-associated actin-dependent regulator of chromatin subfamily D member 1 (Smarcd1).